Consider the following 508-residue polypeptide: MASPMKSDFLAGSHMKLPKIGIAAAVAVVASIVIYLALSSFFVGTDEFKNDENQSIKEYPDNTRFMRFTHGKQLSKAGEDLAGSEPYLVRNGKSKELVIFAPEHLQEFHRKDANSHYKPENMNMGDYAGQLLGQCVGQLGGTKWKLARSHMDPEFSYRASRSMMKRFSQEIDSWVSHLSENPTRRSTQKDVFVQDVKKRCKDLSLRSIAISIYGETFSEENYAFLSTMNELHEKIIFVAFLNKRVMSKWYNKLPTAEKRLMDSFQTQWKAFNLAQIKLAREKKLSCPAEKIYVGVEAGDMSLPEFLQSLDEMLFTNIDITGSILALIFQHLAKDQAMQKKLRAEISAHRAQPGYTVGDYISKQNTLLHFSLLESIRVTPAMYFTLPECNASPKRIGGFHIPAHTPTIVDVNRLNKNESIWGTEADAFRPERFFGLDPARYRFGFVRWGIGRDKCLGKNMAEVILKLAILAVTDKYTLHVPPALPGQGEKSEAGFTINRDVEVEFRPAI.

Residues 22–42 (IAAAVAVVASIVIYLALSSFF) form a helical membrane-spanning segment. N-linked (GlcNAc...) asparagine glycosylation is found at Asn53 and Asn416. Cys454 is a heme binding site.

Belongs to the cytochrome P450 family. Heme is required as a cofactor.

The protein resides in the membrane. In terms of biological role, cytochrome P450 monooxygenase; part of the gene cluster 23 that mediates the biosynthesis of a family of 2-pyridones known as leporins. The hybrid PKS-NRPS synthetase lepA and the enoyl reductase lepG are responsible for fusion of phenylalanine with a hexaketide and subsequent release of the stable tetramic acid precursor, pre-leporin C. Because lepA lacks a designated enoylreductase (ER) domain, the required activity is provided the enoyl reductase lepG. It is possible that the dehydrogenase lepF also participates in production of pre-leporin C. Cytochrome P450 monooxygenase lepH is then required for the ring expansion step to yield leporin C. Leporin C is then presumably further oxidized by the N-hydroxylase lepD to form leporin B. LepI may possess a function in biosynthesis upstream of lepA. Leporin B is further oxidized in the presence of ferric ion to give the leporin B trimer-iron chelate, but whether or not this reaction is catalyzed by an enzyme in the pathway or by ferric ion is not determined yet. The chain is Cytochrome P450 monooxygenase lepD from Aspergillus flavus (strain ATCC 200026 / FGSC A1120 / IAM 13836 / NRRL 3357 / JCM 12722 / SRRC 167).